The chain runs to 906 residues: Catenin alpha-2 (906 aa).

Basic and acidic residues predominate over residues 866 to 880; the sequence is KKPLVKREKPEEYQT. The interval 866–892 is disordered; that stretch reads KKPLVKREKPEEYQTRVRRGSQKKHIS. Positions 881-891 are enriched in basic residues; it reads RVRRGSQKKHI.

Belongs to the vinculin/alpha-catenin family. As to quaternary structure, interacts with CDH1 and CDH2. As to expression, mainly in the nervous system (at protein level).

It localises to the cell membrane. Its subcellular location is the cytoplasm. It is found in the cytoskeleton. The protein resides in the cell junction. The protein localises to the adherens junction. It localises to the cell projection. Its subcellular location is the axon. It is found in the nucleus. In terms of biological role, may function as a linker between cadherin adhesion receptors and the cytoskeleton to regulate cell-cell adhesion and differentiation in the nervous system. In Gallus gallus (Chicken), this protein is Catenin alpha-2 (CTNNA2).